Reading from the N-terminus, the 119-residue chain is Ribonuclease P protein component (119 aa).

Belongs to the RnpA family. Consists of a catalytic RNA component (M1 or rnpB) and a protein subunit.

It catalyses the reaction Endonucleolytic cleavage of RNA, removing 5'-extranucleotides from tRNA precursor.. Its function is as follows. RNaseP catalyzes the removal of the 5'-leader sequence from pre-tRNA to produce the mature 5'-terminus. It can also cleave other RNA substrates such as 4.5S RNA. The protein component plays an auxiliary but essential role in vivo by binding to the 5'-leader sequence and broadening the substrate specificity of the ribozyme. The polypeptide is Ribonuclease P protein component (Serratia proteamaculans (strain 568)).